We begin with the raw amino-acid sequence, 108 residues long: Thiosulfate sulfurtransferase GlpE (108 aa).

Residues 17–105 form the Rhodanese domain; sequence QEKEAVLVDI…WQRQFPAEVA (89 aa). The active-site Cysteine persulfide intermediate is Cys65.

It belongs to the GlpE family.

Its subcellular location is the cytoplasm. The enzyme catalyses thiosulfate + hydrogen cyanide = thiocyanate + sulfite + 2 H(+). It carries out the reaction thiosulfate + [thioredoxin]-dithiol = [thioredoxin]-disulfide + hydrogen sulfide + sulfite + 2 H(+). Transferase that catalyzes the transfer of sulfur from thiosulfate to thiophilic acceptors such as cyanide or dithiols. May function in a CysM-independent thiosulfate assimilation pathway by catalyzing the conversion of thiosulfate to sulfite, which can then be used for L-cysteine biosynthesis. The polypeptide is Thiosulfate sulfurtransferase GlpE (Escherichia coli O127:H6 (strain E2348/69 / EPEC)).